Here is a 91-residue protein sequence, read N- to C-terminus: Transcription factor znf27 (91 aa).

Its subcellular location is the nucleus. Transcription factor; part of the gene cluster 27 that mediates the biosynthesis of asparasone A, a sclerotium-specific anthraquinone pigment important for sclerotial survival. Controls the expression of the non-reducing polyketide synthase (NRPKS) pks27. The polypeptide is Transcription factor znf27 (Aspergillus flavus (strain ATCC 200026 / FGSC A1120 / IAM 13836 / NRRL 3357 / JCM 12722 / SRRC 167)).